Here is a 637-residue protein sequence, read N- to C-terminus: MGLLSQGSPLSWEETKRHADHVRRHGILQFLHIYHAVKDRHKDVLKWGDEVEYMLVSFDHENKKVRLVLSGEKVLETLQEKGERTNPNHPTLWRPEYGSYMIEGTPGQPYGGTMSEFNTVEANMRKRRKEATSILEENQALCTITSFPRLGCPGFTLPEVKPNPVEGGASKSLFFPDEAINKHPRFSTLTRNIRHRRGEKVVINVPIFKDKNTPSPFIETFTEDDEASRASKPDHIYMDAMGFGMGNCCLQVTFQACSISEARYLYDQLATICPIVMALSAASPFYRGYVSDIDCRWGVISASVDDRTREERGLEPLKNNNYRISKSRYDSIDSYLSKCGEKYNDIDLTIDKEIYEQLLQEGIDHLLAQHVAHLFIRDPLTLFEEKIHLDDANESDHFENIQSTNWQTMRFKPPPPNSDIGWRVEFRPMEVQLTDFENSAYVVFVVLLTRVILSYKLDFLIPLSKVDENMKVAQKRDAVLQGMFYFRKDICKGGNAVVDGCGKAQNSTELAAEEYTLMSIDTIINGKEGVFPGLIPILNSYLENMEVDVDTRCSILNYLKLIKKRASGELMTVARWMREFIANHPDYKQDSVITDEMNYSLILKCNQIANELCECPELLGSAFRKVKYSGSKTDSSN.

At M1 the chain carries N-acetylmethionine. A phosphoserine mark is found at S5 and S8.

It belongs to the glutamate--cysteine ligase type 3 family. Heterodimer of a catalytic heavy chain and a regulatory light chain.

The catalysed reaction is L-cysteine + L-glutamate + ATP = gamma-L-glutamyl-L-cysteine + ADP + phosphate + H(+). It catalyses the reaction (2S)-2-aminobutanoate + L-glutamate + ATP = gamma-L-glutamyl-(2S)-2-aminobutanoate + ADP + phosphate + H(+). It participates in sulfur metabolism; glutathione biosynthesis; glutathione from L-cysteine and L-glutamate: step 1/2. With respect to regulation, feedback inhibition by glutathione. Functionally, catalyzes the ATP-dependent ligation of L-glutamate and L-cysteine and participates in the first and rate-limiting step in glutathione biosynthesis. The polypeptide is Glutamate--cysteine ligase catalytic subunit (Homo sapiens (Human)).